Consider the following 208-residue polypeptide: Cysteine-rich protein 2 (208 aa).

The LIM zinc-binding 1 domain maps to 5 to 57; the sequence is CPKCDKTVCFAEKVSSLGKDWHKFCLKCERCSKTLTPGGHAEHDGKPFCHKPC. Lysine 23 is subject to N6-acetyllysine. Residues 98–119 form a disordered region; sequence AEERKASGPPKGPSRASSVTTF. Phosphoserine is present on serine 104. Residues 126-178 enclose the LIM zinc-binding 2 domain; it reads CPRCSKKVYFAEKVTSLGKDWHRPCLHCERCGKTLTPGGHAEHDGQPYCHKPC. N6-acetyllysine occurs at positions 138 and 144.

In terms of assembly, interacts with TGFB1I1.

This is Cysteine-rich protein 2 (CRIP2) from Pongo abelii (Sumatran orangutan).